The chain runs to 159 residues: Capsid protein (159 aa).

S2 bears the N-acetylserine; by host mark.

Belongs to the virgaviridae capsid protein family.

It localises to the virion. Functionally, capsid protein self-assembles to form rod-shaped virions about 18 nm in diameter with a central canal enclosing the viral genomic RNA. This chain is Capsid protein (CP), found in Tobacco mosaic virus (strain Rakkyo) (TMV-R).